We begin with the raw amino-acid sequence, 351 residues long: Cysteine-rich receptor-like protein kinase 45 (351 aa).

Residues 37–287 (NDFSELVGRG…EILRYIHIAL (251 aa)) form the Protein kinase domain. Residues 43–51 (VGRGGFGFV) and lysine 65 each bind ATP. Tyrosine 110 carries the phosphotyrosine modification. The active-site Proton acceptor is the aspartate 162. 2 positions are modified to phosphothreonine: threonine 197 and threonine 202. Position 210 is a phosphotyrosine (tyrosine 210).

Belongs to the protein kinase superfamily. Ser/Thr protein kinase family. CRK subfamily. In terms of assembly, interacts with CRK36. In terms of processing, autophosphorylated and phosphorylated by CRK36.

It localises to the cytoplasm. The protein localises to the cytosol. The enzyme catalyses L-seryl-[protein] + ATP = O-phospho-L-seryl-[protein] + ADP + H(+). It catalyses the reaction L-threonyl-[protein] + ATP = O-phospho-L-threonyl-[protein] + ADP + H(+). Functionally, forms a complex with CRK36 that may negatively control abscisic acid (ABA) and osmotic stress signal transduction. Involved in plant response to ABA during seed germination, early seedling growth and responses to abiotic stresses by inducing the expression of ABA-responsive genes and stress-inducible genes. Acts as a positive regulator in disease resistance, downstream of NPR1 and WRKY70. The polypeptide is Cysteine-rich receptor-like protein kinase 45 (Arabidopsis thaliana (Mouse-ear cress)).